The following is a 528-amino-acid chain: Na(+)/H(+) antiporter NhaB (528 aa).

The next 11 membrane-spanning stretches (helical) occupy residues 23–43 (VAII…DPFV), 45–65 (GWLL…CYPL), 90–110 (LVAN…IYFM), 136–156 (CFAA…AVVI), 204–224 (LLMH…VGEP), 242–262 (IRMA…CAIV), 305–325 (GLIA…VGLI), 350–370 (EEAL…AVII), 392–412 (LALF…VFVG), 450–470 (ATPN…APLI), and 479–499 (IMAL…IMFF).

Belongs to the NhaB Na(+)/H(+) (TC 2.A.34) antiporter family.

The protein localises to the cell inner membrane. It carries out the reaction 2 Na(+)(in) + 3 H(+)(out) = 2 Na(+)(out) + 3 H(+)(in). Na(+)/H(+) antiporter that extrudes sodium in exchange for external protons. The sequence is that of Na(+)/H(+) antiporter NhaB from Vibrio campbellii (strain ATCC BAA-1116).